A 305-amino-acid polypeptide reads, in one-letter code: Target of rapamycin complex subunit LST8-1 (305 aa).

WD repeat units lie at residues 1–30 (MSQP…CYRT), 33–71 (YPDS…PQPV), 76–115 (SHTN…CQKE), 117–156 (ESVA…CSCE), 160–199 (EVDT…QTMT), 209–248 (AHNG…LEKV), and 251–292 (GHQR…KVYQ).

The protein belongs to the WD repeat LST8 family. The target of rapamycin complex 1 (TORC1) is composed of at least RAPTOR, LST8 and TOR. Interacts with TOR. In terms of tissue distribution, expressed in the root central cylinder, root tips, emerging lateral roots, vasculature of cotyledons, leaf stomata, leaf stipules, anthers, pollen, filaments, and vasculature of petals and sepals.

It is found in the endosome. Component of TORC1 complex, which is an essential cell growth regulator that controls plant development. Acts by activating transcription, protein synthesis and ribosome biogenesis, and inhibiting mRNA degradation and autophagy. Involved in regulating amino acid accumulation and the synthesis of myo-inositol and raffinose during plant adaptation to long days. Involved in the regulation of plant growth and abscisic acid (ABA) accumulation. Acts as a positive regulation of the ABA biosynthetic genes ZEP, NCED3 and AAO3, and negative regulator of the ABA catabolic genes CYP707A2 and CYP707A3. This Arabidopsis thaliana (Mouse-ear cress) protein is Target of rapamycin complex subunit LST8-1.